The sequence spans 415 residues: Acetylornithine aminotransferase (415 aa).

Pyridoxal 5'-phosphate is bound by residues 115-116 (GA) and Phe-148. N(2)-acetyl-L-ornithine is bound at residue Arg-151. 239–242 (DEVQ) is a pyridoxal 5'-phosphate binding site. Lys-268 bears the N6-(pyridoxal phosphate)lysine mark. Residue Ser-295 coordinates N(2)-acetyl-L-ornithine. Thr-296 is a binding site for pyridoxal 5'-phosphate.

It belongs to the class-III pyridoxal-phosphate-dependent aminotransferase family. ArgD subfamily. Homodimer. It depends on pyridoxal 5'-phosphate as a cofactor.

Its subcellular location is the cytoplasm. The catalysed reaction is N(2)-acetyl-L-ornithine + 2-oxoglutarate = N-acetyl-L-glutamate 5-semialdehyde + L-glutamate. The protein operates within amino-acid biosynthesis; L-arginine biosynthesis; N(2)-acetyl-L-ornithine from L-glutamate: step 4/4. The chain is Acetylornithine aminotransferase from Prochlorococcus marinus subsp. pastoris (strain CCMP1986 / NIES-2087 / MED4).